A 220-amino-acid chain; its full sequence is Deoxyribose-phosphate aldolase (220 aa).

D89 acts as the Proton donor/acceptor in catalysis. K151 acts as the Schiff-base intermediate with acetaldehyde in catalysis. The Proton donor/acceptor role is filled by K180.

This sequence belongs to the DeoC/FbaB aldolase family. DeoC type 1 subfamily. Homotetramer, in solution and in the crystal structure.

It localises to the cytoplasm. The catalysed reaction is 2-deoxy-D-ribose 5-phosphate = D-glyceraldehyde 3-phosphate + acetaldehyde. It functions in the pathway carbohydrate degradation; 2-deoxy-D-ribose 1-phosphate degradation; D-glyceraldehyde 3-phosphate and acetaldehyde from 2-deoxy-alpha-D-ribose 1-phosphate: step 2/2. Catalyzes a reversible aldol reaction between acetaldehyde and D-glyceraldehyde 3-phosphate to generate 2-deoxy-D-ribose 5-phosphate. This chain is Deoxyribose-phosphate aldolase, found in Thermus thermophilus (strain ATCC 27634 / DSM 579 / HB8).